Here is a 116-residue protein sequence, read N- to C-terminus: Large ribosomal subunit protein bL17 (116 aa).

Belongs to the bacterial ribosomal protein bL17 family. Part of the 50S ribosomal subunit. Contacts protein L32.

This chain is Large ribosomal subunit protein bL17, found in Cyanothece sp. (strain PCC 7425 / ATCC 29141).